The primary structure comprises 235 residues: 1-(5-phosphoribosyl)-5-[(5-phosphoribosylamino)methylideneamino] imidazole-4-carboxamide isomerase (235 aa).

The Proton acceptor role is filled by aspartate 8. The Proton donor role is filled by aspartate 128.

Belongs to the HisA/HisF family.

Its subcellular location is the cytoplasm. The catalysed reaction is 1-(5-phospho-beta-D-ribosyl)-5-[(5-phospho-beta-D-ribosylamino)methylideneamino]imidazole-4-carboxamide = 5-[(5-phospho-1-deoxy-D-ribulos-1-ylimino)methylamino]-1-(5-phospho-beta-D-ribosyl)imidazole-4-carboxamide. It functions in the pathway amino-acid biosynthesis; L-histidine biosynthesis; L-histidine from 5-phospho-alpha-D-ribose 1-diphosphate: step 4/9. The polypeptide is 1-(5-phosphoribosyl)-5-[(5-phosphoribosylamino)methylideneamino] imidazole-4-carboxamide isomerase (Thermus thermophilus (strain ATCC 27634 / DSM 579 / HB8)).